Consider the following 360-residue polypeptide: Chorismate synthase (360 aa).

R46 provides a ligand contact to NADP(+). Residues R122–S124, G282, K297–S301, and R324 each bind FMN.

Belongs to the chorismate synthase family. Requires FMNH2 as cofactor.

It carries out the reaction 5-O-(1-carboxyvinyl)-3-phosphoshikimate = chorismate + phosphate. It functions in the pathway metabolic intermediate biosynthesis; chorismate biosynthesis; chorismate from D-erythrose 4-phosphate and phosphoenolpyruvate: step 7/7. Catalyzes the anti-1,4-elimination of the C-3 phosphate and the C-6 proR hydrogen from 5-enolpyruvylshikimate-3-phosphate (EPSP) to yield chorismate, which is the branch point compound that serves as the starting substrate for the three terminal pathways of aromatic amino acid biosynthesis. This reaction introduces a second double bond into the aromatic ring system. The chain is Chorismate synthase from Archaeoglobus fulgidus (strain ATCC 49558 / DSM 4304 / JCM 9628 / NBRC 100126 / VC-16).